Reading from the N-terminus, the 73-residue chain is Small ribosomal subunit protein bS18 (73 aa).

It belongs to the bacterial ribosomal protein bS18 family. In terms of assembly, part of the 30S ribosomal subunit. Forms a tight heterodimer with protein bS6.

In terms of biological role, binds as a heterodimer with protein bS6 to the central domain of the 16S rRNA, where it helps stabilize the platform of the 30S subunit. The polypeptide is Small ribosomal subunit protein bS18 (Synechococcus sp. (strain RCC307)).